The following is a 1560-amino-acid chain: BRD4-interacting chromatin-remodeling complex-associated protein (1560 aa).

6 disordered regions span residues 53-99, 624-688, 723-949, 974-1028, 1049-1075, and 1215-1300; these read VQEA…GADQ, APQA…ATPT, IVSA…VTTP, NKAG…TGLP, KAAS…KPPT, and SSEG…IKTY. The span at 86-96 shows a compositional bias: gly residues; sequence ATGGGGGGSGG. Over residues 624–664 the composition is skewed to low complexity; that stretch reads APQAPPAVSTPLPLGLQQPQAQQPPQAPTPQAAAPPQATTP. A compositionally biased stretch (pro residues) spans 726–736; that stretch reads APPPAQDPAPA. The span at 747 to 780 shows a compositional bias: low complexity; that stretch reads PQAPDSQASPAPAPQIPAAAPLKGPGPSSSPSLP. Composition is skewed to pro residues over residues 791 to 806, 814 to 831, and 843 to 880; these read LPSP…PPSR, PSEP…PPTL, and VPPP…PHLP. Residues 881–896 show a composition bias toward low complexity; the sequence is PSSTSSAVASSSETSS. At S919 the chain carries Phosphoserine. Residue T921 is modified to Phosphothreonine. The span at 932–941 shows a compositional bias: pro residues; that stretch reads PAAPPPPPPR. The segment covering 1005 to 1028 has biased composition (low complexity); that stretch reads APSGTPTAPSHAPAPAPMAATGLP. Residue K1057 is modified to N6-acetyllysine. Over residues 1227 to 1236 the composition is skewed to polar residues; that stretch reads LSSSAPGAST. The span at 1264–1281 shows a compositional bias: low complexity; sequence ASSSLSSSSSSSSAASSL. A Glycyl lysine isopeptide (Lys-Gly) (interchain with G-Cter in SUMO2) cross-link involves residue K1313. Disordered stretches follow at residues 1324 to 1424 and 1440 to 1560; these read NTAL…VDEA and YQRM…TLTR. Positions 1331-1356 are enriched in pro residues; it reads HQPPPPPATLKVAEPPPRPPPPPPPT. The segment covering 1401–1412 has biased composition (low complexity); the sequence is PEGTPAGRARGG. Residue S1413 is modified to Phosphoserine. Positions 1485–1515 are enriched in polar residues; sequence ASFSSDSPQDDTLTEHLQSAIDSILNLQQAP.

In terms of assembly, component of the multiprotein chromatin-remodeling complexes SWI/SNF: SWI/SNF-A (BAF), SWI/SNF-B (PBAF) and related complexes. The canonical complex contains a catalytic subunit (either SMARCA4/BRG1/BAF190A or SMARCA2/BRM/BAF190B) and at least SMARCE1, ACTL6A/BAF53, SMARCC1/BAF155, SMARCC2/BAF170, and SMARCB1/SNF5/BAF47. Other subunits specific to each of the complexes may also be present permitting several possible combinations developmentally and tissue specific. Component of the SWI/SNF (GBAF) subcomplex, which includes at least BICRA or BICRAL (mutually exclusive), BRD9, SS18, the core BAF subunits, SMARCA2/BRM, SMARCA4/BRG1/BAF190A, ACTL6A/BAF53, SMARCC1/BAF155, and SMARCD1/BAF60A. Interacts with BRD4; the interaction bridges BRD4 to the GBAF complex. Expressed at moderate levels in heart, brain, placenta, skeletal muscle, and pancreas, and at lower levels in lung, liver and kidney.

It is found in the nucleus. Component of SWI/SNF chromatin remodeling subcomplex GBAF that carries out key enzymatic activities, changing chromatin structure by altering DNA-histone contacts within a nucleosome in an ATP-dependent manner. May play a role in BRD4-mediated gene transcription. The polypeptide is BRD4-interacting chromatin-remodeling complex-associated protein (Homo sapiens (Human)).